The chain runs to 101 residues: MMLEYALVLSAFLFSIGIYGLITSRNMVRALMCLELILNAVNMNLVTFSYFFDNRQLKGDIFSIFIIAIAAAEAAIGLAIVSSIYRNRKSTRIDQSNLLNN.

A run of 3 helical transmembrane segments spans residues 2 to 22 (MLEY…YGLI), 32 to 52 (MCLE…SYFF), and 61 to 81 (IFSI…LAIV).

The protein belongs to the complex I subunit 4L family. In terms of assembly, NDH is composed of at least 16 different subunits, 5 of which are encoded in the nucleus.

Its subcellular location is the plastid. The protein localises to the chloroplast thylakoid membrane. It catalyses the reaction a plastoquinone + NADH + (n+1) H(+)(in) = a plastoquinol + NAD(+) + n H(+)(out). The catalysed reaction is a plastoquinone + NADPH + (n+1) H(+)(in) = a plastoquinol + NADP(+) + n H(+)(out). NDH shuttles electrons from NAD(P)H:plastoquinone, via FMN and iron-sulfur (Fe-S) centers, to quinones in the photosynthetic chain and possibly in a chloroplast respiratory chain. The immediate electron acceptor for the enzyme in this species is believed to be plastoquinone. Couples the redox reaction to proton translocation, and thus conserves the redox energy in a proton gradient. In Ipomoea purpurea (Common morning glory), this protein is NAD(P)H-quinone oxidoreductase subunit 4L, chloroplastic.